A 425-amino-acid polypeptide reads, in one-letter code: MEPSATPGPQMGVPTEGRERSPEPPDYEDEFLRYLWRDYLYPKQYEWVLIAAYVAVFFVALVGNTLVCLAVWRNHHMRTVTNYFIVNLSLADVLVTAICLPASLLVDITESWLFGHALCKVIPYLQAVSVSVAVLTLSFIALDRWYAICHPLLFKSTARRARGSILGIWAVSLAVMVPQAAVMECSSVLPELANRTRLFSVCDERWADDLYPKIYHSCFFIVTYLAPLGLMAMAYFQIFRKLWGRQIPGTTSALVRNWKRPSVQLEEQGQGLGAEPQPRARAFLAEVKQMRARRKTAKMLMVVLLVFALCYLPISVLNVLKRVFGMFRQASDREAVYACFTFSHWLVYANSAANPIIYNFLSGKFREQFKAAFSCCLPGLGPCVSLKVPSPRSSASHKSLSLQSRCSVSKASEHVLLTSVTTVLP.

The disordered stretch occupies residues 1-25 (MEPSATPGPQMGVPTEGRERSPEPP). Over 1-46 (MEPSATPGPQMGVPTEGRERSPEPPDYEDEFLRYLWRDYLYPKQYE) the chain is Extracellular. The required for response to orexin-A stretch occupies residues 26-41 (DYEDEFLRYLWRDYLY). The chain crosses the membrane as a helical span at residues 47-67 (WVLIAAYVAVFFVALVGNTLV). Over 68 to 82 (CLAVWRNHHMRTVTN) the chain is Cytoplasmic. A helical transmembrane segment spans residues 83–105 (YFIVNLSLADVLVTAICLPASLL). The Extracellular portion of the chain corresponds to 106 to 119 (VDITESWLFGHALC). Cys119 and Cys202 form a disulfide bridge. A helical transmembrane segment spans residues 120 to 140 (KVIPYLQAVSVSVAVLTLSFI). The Cytoplasmic segment spans residues 141 to 160 (ALDRWYAICHPLLFKSTARR). A helical transmembrane segment spans residues 161 to 182 (ARGSILGIWAVSLAVMVPQAAV). Over 183–213 (MECSSVLPELANRTRLFSVCDERWADDLYPK) the chain is Extracellular. Residue Asn194 is glycosylated (N-linked (GlcNAc...) asparagine). Residues 214-235 (IYHSCFFIVTYLAPLGLMAMAY) traverse the membrane as a helical segment. Topologically, residues 236 to 298 (FQIFRKLWGR…QMRARRKTAK (63 aa)) are cytoplasmic. The chain crosses the membrane as a helical span at residues 299–321 (MLMVVLLVFALCYLPISVLNVLK). The Extracellular portion of the chain corresponds to 322-336 (RVFGMFRQASDREAV). A helical membrane pass occupies residues 337 to 360 (YACFTFSHWLVYANSAANPIIYNF). Residues 361-425 (LSGKFREQFK…LLTSVTTVLP (65 aa)) are Cytoplasmic-facing.

Belongs to the G-protein coupled receptor 1 family.

The protein resides in the cell membrane. In terms of biological role, moderately selective excitatory receptor for orexin-A and, with a lower affinity, for orexin-B neuropeptide. Triggers an increase in cytoplasmic Ca(2+) levels in response to orexin-A binding. The chain is Orexin/Hypocretin receptor type 1 from Bos taurus (Bovine).